A 103-amino-acid chain; its full sequence is Protein Rev (103 aa).

The residue at position 5 (serine 5) is a Phosphoserine; by host CK2. Residues 17–25 (IIKILYQSN) form a homomultimerization region. 2 disordered regions span residues 24 to 49 (SNPC…RRQA) and 82 to 103 (IRDP…TKDN). The Nuclear localization signal and RNA-binding (RRE) signature appears at 33 to 49 (SRNARKNRRRRWRRRQA). The span at 35 to 48 (NARKNRRRRWRRRQ) shows a compositional bias: basic residues. The Nuclear export signal and binding to XPO1 signature appears at 72-83 (VDLPPLEQLNIR).

Belongs to the HIV-1 REV protein family. Homomultimer; when bound to the RRE. Multimeric assembly is essential for activity and may involve XPO1. Binds to human KPNB1, XPO1, TNPO1, RANBP5 and IPO7. Interacts with the viral Integrase. Interacts with human KHDRBS1. Interacts with human NAP1; this interaction decreases Rev multimerization and stimulates its activity. Interacts with human DEAD-box helicases DDX3 and DDX24; these interactions may serve for viral RNA export to the cytoplasm and packaging, respectively. Interacts with human PSIP1; this interaction may inhibit HIV-1 DNA integration by promoting dissociation of the Integrase-LEDGF/p75 complex. Asymmetrically arginine dimethylated at one site by host PRMT6. Methylation impairs the RNA-binding activity and export of viral RNA from the nucleus to the cytoplasm. Post-translationally, phosphorylated by protein kinase CK2. Presence of, and maybe binding to the N-terminus of the regulatory beta subunit of CK2 is necessary for CK2-mediated Rev's phosphorylation.

It is found in the host nucleus. Its subcellular location is the host nucleolus. The protein localises to the host cytoplasm. Functionally, escorts unspliced or incompletely spliced viral pre-mRNAs (late transcripts) out of the nucleus of infected cells. These pre-mRNAs carry a recognition sequence called Rev responsive element (RRE) located in the env gene, that is not present in fully spliced viral mRNAs (early transcripts). This function is essential since most viral proteins are translated from unspliced or partially spliced pre-mRNAs which cannot exit the nucleus by the pathway used by fully processed cellular mRNAs. Rev itself is translated from a fully spliced mRNA that readily exits the nucleus. Rev's nuclear localization signal (NLS) binds directly to KPNB1/Importin beta-1 without previous binding to KPNA1/Importin alpha-1. KPNB1 binds to the GDP bound form of RAN (Ran-GDP) and targets Rev to the nucleus. In the nucleus, the conversion from Ran-GDP to Ran-GTP dissociates Rev from KPNB1 and allows Rev's binding to the RRE in viral pre-mRNAs. Rev multimerization on the RRE via cooperative assembly exposes its nuclear export signal (NES) to the surface. Rev can then form a complex with XPO1/CRM1 and Ran-GTP, leading to nuclear export of the complex. Conversion from Ran-GTP to Ran-GDP mediates dissociation of the Rev/RRE/XPO1/RAN complex, so that Rev can return to the nucleus for a subsequent round of export. Beside KPNB1, also seems to interact with TNPO1/Transportin-1, RANBP5/IPO5 and IPO7/RANBP7 for nuclear import. The nucleoporin-like HRB/RIP is an essential cofactor that probably indirectly interacts with Rev to release HIV RNAs from the perinuclear region to the cytoplasm. This is Protein Rev from Human immunodeficiency virus type 1 group O (isolate MVP5180) (HIV-1).